Reading from the N-terminus, the 137-residue chain is Probable 4-amino-4-deoxy-L-arabinose-phosphoundecaprenol flippase subunit ArnF (137 aa).

Topologically, residues 1-3 (MNA) are cytoplasmic. The helical transmembrane segment at 4 to 24 (LRGWLAALGSVLLASAAQLGM) threads the bilayer. Over 25-44 (RWGMSRLPLPEAWAGQTPER) the chain is Periplasmic. The helical transmembrane segment at 45 to 65 (AALLAVALAVAAYAASLLCWL) threads the bilayer. Residues 66 to 76 (AALRHLPLGRA) lie on the Cytoplasmic side of the membrane. Residues 77–97 (YSLLSASYALVYLLAASLPAF) form a helical membrane-spanning segment. Topologically, residues 98 to 100 (DET) are periplasmic. A helical transmembrane segment spans residues 101 to 121 (FSTSKTLGVGLVVLGVLTVNA). The Cytoplasmic segment spans residues 122-137 (RRTAAAPAHHPSRKAP).

The protein belongs to the ArnF family. As to quaternary structure, heterodimer of ArnE and ArnF.

The protein resides in the cell inner membrane. It participates in bacterial outer membrane biogenesis; lipopolysaccharide biosynthesis. Translocates 4-amino-4-deoxy-L-arabinose-phosphoundecaprenol (alpha-L-Ara4N-phosphoundecaprenol) from the cytoplasmic to the periplasmic side of the inner membrane. The sequence is that of Probable 4-amino-4-deoxy-L-arabinose-phosphoundecaprenol flippase subunit ArnF from Pseudomonas aeruginosa (strain ATCC 15692 / DSM 22644 / CIP 104116 / JCM 14847 / LMG 12228 / 1C / PRS 101 / PAO1).